Here is a 101-residue protein sequence, read N- to C-terminus: Pro-corazonin (101 aa).

The N-terminal stretch at 1–16 (MLVLFVLSLVVSCALC) is a signal peptide. Asn-27 is subject to Asparagine amide. A propeptide spanning residues 31–101 (SNFPAEISAL…REKAPNNDNY (71 aa)) is cleaved from the precursor.

It belongs to the corazonin family. Expressed in central brain and the retrocerebral complex but not in antennal lobes, optic lobes or in gnathal, thoracic and abdominal ganglia (at protein level).

It localises to the secreted. Its function is as follows. Cardioactive peptide. Corazonin is probably involved in the physiological regulation of the heart beat. This chain is Pro-corazonin, found in Camponotus floridanus (Florida carpenter ant).